The following is an 826-amino-acid chain: Ubiquitin carboxyl-terminal hydrolase 16 (826 aa).

The segment at 1 to 23 is disordered; sequence MGKKRTKGKSVPEKASSESTEPM. The segment at 22–141 adopts a UBP-type zinc-finger fold; sequence PMCRHLRKGL…QVVDYVRKQA (120 aa). Zn(2+)-binding residues include Cys24, His26, Cys48, Cys51, Cys73, Cys76, Cys81, His89, His93, His102, Cys115, and Cys118. A Glycyl lysine isopeptide (Lys-Gly) (interchain with G-Cter in SUMO2) cross-link involves residue Lys139. The segment at 145-184 is disordered; that stretch reads TSKPAEKNNGHIELENKKLEKESKNEQEREKSESMAKENI. The segment covering 148–180 has biased composition (basic and acidic residues); it reads PAEKNNGHIELENKKLEKESKNEQEREKSESMA. Residue Ser188 is modified to Phosphoserine. Residues 195-825 form the USP domain; that stretch reads KGLSNLGNTC…QAYLLFYERI (631 aa). Cys204 serves as the catalytic Nucleophile. Over residues 392-407 the composition is skewed to basic and acidic residues; sequence QSGKKNINDKNVKKTM. 2 disordered regions span residues 392–456 and 526–553; these read QSGK…RRQQ and ADER…TSAP. Over residues 408–419 the composition is skewed to acidic residues; sequence EEEDKDSEEEKD. A Phosphoserine modification is found at Ser414. Residues 436-456 are compositionally biased toward basic residues; it reads HTQKKAKKQAKKQAKNQRRQQ. Positions 526–537 are enriched in basic and acidic residues; the sequence is ADERKCPEHPEV. Residues 539–551 show a composition bias toward polar residues; it reads SVSTESDLGSLTS. His760 functions as the Proton acceptor in the catalytic mechanism.

This sequence belongs to the peptidase C19 family. USP16 subfamily. As to quaternary structure, homotetramer. Associates with late pre-40S ribosomes. Interacts with CEP78; promoting deubiquitination of tektins. In terms of processing, phosphorylated at the onset of mitosis and dephosphorylated during the metaphase/anaphase transition. Phosphorylation by AURKB enhances the deubiquitinase activity.

It is found in the nucleus. It catalyses the reaction Thiol-dependent hydrolysis of ester, thioester, amide, peptide and isopeptide bonds formed by the C-terminal Gly of ubiquitin (a 76-residue protein attached to proteins as an intracellular targeting signal).. Functionally, specifically deubiquitinates 'Lys-120' of histone H2A (H2AK119Ub), a specific tag for epigenetic transcriptional repression, thereby acting as a coactivator. Deubiquitination of histone H2A is a prerequisite for subsequent phosphorylation at 'Ser-11' of histone H3 (H3S10ph), and is required for chromosome segregation when cells enter into mitosis. In resting B- and T-lymphocytes, phosphorylation by AURKB leads to enhance its activity, thereby maintaining transcription in resting lymphocytes. Regulates Hox gene expression via histone H2A deubiquitination. Prefers nucleosomal substrates. Does not deubiquitinate histone H2B. Also deubiquitinates non-histone proteins, such as ribosomal protein RPS27A: deubiquitination of monoubiquitinated RPS27A promotes maturation of the 40S ribosomal subunit. Also mediates deubiquitination of tektin proteins (TEKT1, TEKT2, TEK3, TEKT4 and TEKT5), promoting their stability. This is Ubiquitin carboxyl-terminal hydrolase 16 (Usp16) from Rattus norvegicus (Rat).